Here is a 652-residue protein sequence, read N- to C-terminus: Spermatogenesis-associated protein 13 (652 aa).

A disordered region spans residues 1–24 (MTSASPEDQNAPVGCPKGARRRRP). Residue Ser78 is modified to Phosphoserine. The disordered stretch occupies residues 81-108 (IGLDRVGRRRQMRASNVSSDGGTEPSAL). The segment at 98-150 (SSDGGTEPSALVDDNGSEEDFSYEDLCQASPRYLQPGGEQLAINELISDGNVV) is ABR (APC-binding region) domain. Ser114 is modified (phosphoserine). The SH3 domain occupies 147 to 206 (GNVVCAEALWDHVTMDDQELGFKAGDVIQVLEASNKDWWWGRSEDKEAWFPASFVRLRVN). The disordered stretch occupies residues 209 to 235 (ELSENSSSTPSEEQDEEASQSRHRHCE). In terms of domain architecture, DH spans 240–424 (MRTNVIREIM…KNVACLINER (185 aa)). The 107-residue stretch at 455-561 (ELIHSGELTK…WLQACADERR (107 aa)) folds into the PH domain. The interval 561-652 (RRVQEDKEMG…TFNRLTPFRK (92 aa)) is C-terminal tail.

Interacts (via ABR and SH3 domain) with APC. The binding of APC enhances its GEF activity by relieving it from an autoinhibitory conformation, in which the ABR and SH3 domains are associated with the C-terminal tail. Interacts (via C-terminal tail) with PPP1R9B (via C-terminus). Interacts with RAC1. In terms of tissue distribution, expressed at high levels in the placenta, spleen and kidney, at moderate levels in lung, small intestine, liver, brain and heart, and at low levels in skeletal muscle. Expression is aberrantly enhanced in most colorectal tumors.

The protein resides in the cytoplasm. The protein localises to the cell projection. It localises to the filopodium. It is found in the lamellipodium. Its subcellular location is the ruffle membrane. The protein resides in the podosome. Both the ABR and the SH3 domains contribute to maintaining the protein in an inhibited conformation by associating with the C-terminal tail. Binding of these domains to the C-terminal tail inhibits the activity of the protein by blocking a region that is required for its GEF activity. Its function is as follows. Acts as a guanine nucleotide exchange factor (GEF) for RHOA, RAC1 and CDC42 GTPases. Regulates cell migration and adhesion assembly and disassembly through a RAC1, PI3K, RHOA and AKT1-dependent mechanism. Increases both RAC1 and CDC42 activity, but decreases the amount of active RHOA. Required for MMP9 up-regulation via the JNK signaling pathway in colorectal tumor cells. Involved in tumor angiogenesis and may play a role in intestinal adenoma formation and tumor progression. This is Spermatogenesis-associated protein 13 from Homo sapiens (Human).